The chain runs to 156 residues: 6,7-dimethyl-8-ribityllumazine synthase (156 aa).

Residues phenylalanine 23, 57–59 (AYE), and 81–83 (AII) contribute to the 5-amino-6-(D-ribitylamino)uracil site. 86-87 (ST) serves as a coordination point for (2S)-2-hydroxy-3-oxobutyl phosphate. Catalysis depends on histidine 89, which acts as the Proton donor. Phenylalanine 114 lines the 5-amino-6-(D-ribitylamino)uracil pocket. Residue arginine 128 participates in (2S)-2-hydroxy-3-oxobutyl phosphate binding.

Belongs to the DMRL synthase family.

It carries out the reaction (2S)-2-hydroxy-3-oxobutyl phosphate + 5-amino-6-(D-ribitylamino)uracil = 6,7-dimethyl-8-(1-D-ribityl)lumazine + phosphate + 2 H2O + H(+). It functions in the pathway cofactor biosynthesis; riboflavin biosynthesis; riboflavin from 2-hydroxy-3-oxobutyl phosphate and 5-amino-6-(D-ribitylamino)uracil: step 1/2. Its function is as follows. Catalyzes the formation of 6,7-dimethyl-8-ribityllumazine by condensation of 5-amino-6-(D-ribitylamino)uracil with 3,4-dihydroxy-2-butanone 4-phosphate. This is the penultimate step in the biosynthesis of riboflavin. This is 6,7-dimethyl-8-ribityllumazine synthase from Campylobacter hominis (strain ATCC BAA-381 / DSM 21671 / CCUG 45161 / LMG 19568 / NCTC 13146 / CH001A).